The chain runs to 116 residues: Large ribosomal subunit protein uL18 (116 aa).

The protein belongs to the universal ribosomal protein uL18 family. In terms of assembly, part of the 50S ribosomal subunit; part of the 5S rRNA/L5/L18/L25 subcomplex. Contacts the 5S and 23S rRNAs.

Functionally, this is one of the proteins that bind and probably mediate the attachment of the 5S RNA into the large ribosomal subunit, where it forms part of the central protuberance. This is Large ribosomal subunit protein uL18 from Novosphingobium aromaticivorans (strain ATCC 700278 / DSM 12444 / CCUG 56034 / CIP 105152 / NBRC 16084 / F199).